Consider the following 146-residue polypeptide: Nuclear export protein (146 aa).

In terms of assembly, interacts with host HSC70.

It localises to the host cytoplasm. May mediate the nuclear export of encapsidated genomic RNAs (ribonucleoproteins, RNPs). Interaction of viral NEP with M1-Hsc70 is thought to promote nuclear export of the viral encapsidated genomes. The sequence is that of Nuclear export protein from Infectious salmon anemia virus (isolate Atlantic salmon/Norway/810/9/99) (ISAV).